The sequence spans 211 residues: Imidazole glycerol phosphate synthase subunit HisH (211 aa).

A Glutamine amidotransferase type-1 domain is found at 1-211; sequence MIGIIDYGMG…VGIATGRGNG (211 aa). The active-site Nucleophile is C79. Residues H186 and E188 contribute to the active site.

In terms of assembly, heterodimer of HisH and HisF.

It localises to the cytoplasm. The enzyme catalyses 5-[(5-phospho-1-deoxy-D-ribulos-1-ylimino)methylamino]-1-(5-phospho-beta-D-ribosyl)imidazole-4-carboxamide + L-glutamine = D-erythro-1-(imidazol-4-yl)glycerol 3-phosphate + 5-amino-1-(5-phospho-beta-D-ribosyl)imidazole-4-carboxamide + L-glutamate + H(+). It carries out the reaction L-glutamine + H2O = L-glutamate + NH4(+). The protein operates within amino-acid biosynthesis; L-histidine biosynthesis; L-histidine from 5-phospho-alpha-D-ribose 1-diphosphate: step 5/9. In terms of biological role, IGPS catalyzes the conversion of PRFAR and glutamine to IGP, AICAR and glutamate. The HisH subunit catalyzes the hydrolysis of glutamine to glutamate and ammonia as part of the synthesis of IGP and AICAR. The resulting ammonia molecule is channeled to the active site of HisF. This Geobacillus kaustophilus (strain HTA426) protein is Imidazole glycerol phosphate synthase subunit HisH.